A 196-amino-acid chain; its full sequence is GTP cyclohydrolase 1 (196 aa).

Zn(2+)-binding residues include Cys86, His89, and Cys158.

This sequence belongs to the GTP cyclohydrolase I family. Homomer.

It carries out the reaction GTP + H2O = 7,8-dihydroneopterin 3'-triphosphate + formate + H(+). It functions in the pathway cofactor biosynthesis; 7,8-dihydroneopterin triphosphate biosynthesis; 7,8-dihydroneopterin triphosphate from GTP: step 1/1. This Clostridium botulinum (strain Kyoto / Type A2) protein is GTP cyclohydrolase 1.